The following is a 114-amino-acid chain: Adapter SH3BGRL (114 aa).

The required for interaction with HER2 stretch occupies residues 13 to 50 (SMAIKKKQQDVLGFLEANKIGFEEKDIAANEENRKWMR). Positions 54–71 (PENSRPATGYPLPPQIFN) are required for interaction with PFN1, HER2, and ATG12. The SH3-binding signature appears at 61–67 (TGYPLPP).

The protein belongs to the SH3BGR family. As to quaternary structure, monomer. Interacts with PFN1/Profilin-1. Interacts with ERBB2. Interacts with ATG12. Interacts with BECN1. Interacts with translating ribosomes.

It is found in the cytoplasm. The protein resides in the cytosol. It localises to the cell membrane. In terms of biological role, appears to function as an adapter protein that bridges proteins together or proteins with mRNAs. May function as a ubiquitin ligase-substrate adapter. Additionally, associates with translating cytoplasmic ribosomes and may promote the expression of specific mRNAs. This Bos taurus (Bovine) protein is Adapter SH3BGRL (SH3BGRL).